The primary structure comprises 91 residues: Ribonuclease P protein component 4 (91 aa).

Zn(2+) is bound by residues C55, C58, C78, and C81.

This sequence belongs to the eukaryotic/archaeal RNase P protein component 4 family. As to quaternary structure, consists of a catalytic RNA component and at least 4-5 protein subunits. It depends on Zn(2+) as a cofactor.

It is found in the cytoplasm. The enzyme catalyses Endonucleolytic cleavage of RNA, removing 5'-extranucleotides from tRNA precursor.. In terms of biological role, part of ribonuclease P, a protein complex that generates mature tRNA molecules by cleaving their 5'-ends. The protein is Ribonuclease P protein component 4 of Thermoplasma acidophilum (strain ATCC 25905 / DSM 1728 / JCM 9062 / NBRC 15155 / AMRC-C165).